The primary structure comprises 41 residues: Histone H3.2 (41 aa).

The segment at 1 to 41 is disordered; the sequence is MARAKQTARKSTGAEAPRKQLASKAARKSAPATGGIKKPHR.

This sequence belongs to the histone H3 family. The nucleosome is a histone octamer containing two molecules each of H2A, H2B, H3 and H4 assembled in one H3-H4 heterotetramer and two H2A-H2B heterodimers. The octamer wraps approximately 147 bp of DNA.

Its subcellular location is the nucleus. It localises to the chromosome. Core component of nucleosome. Nucleosomes wrap and compact DNA into chromatin, limiting DNA accessibility to the cellular machineries which require DNA as a template. Histones thereby play a central role in transcription regulation, DNA repair, DNA replication and chromosomal stability. DNA accessibility is regulated via a complex set of post-translational modifications of histones, also called histone code, and nucleosome remodeling. This chain is Histone H3.2, found in Tetrahymena borealis.